Here is a 308-residue protein sequence, read N- to C-terminus: tRNA dimethylallyltransferase (308 aa).

An ATP-binding site is contributed by 9–16 (GPTAVGKT). 11–16 (TAVGKT) contributes to the substrate binding site. The segment at 34 to 37 (DSMQ) is interaction with substrate tRNA.

The protein belongs to the IPP transferase family. Monomer. It depends on Mg(2+) as a cofactor.

The catalysed reaction is adenosine(37) in tRNA + dimethylallyl diphosphate = N(6)-dimethylallyladenosine(37) in tRNA + diphosphate. Functionally, catalyzes the transfer of a dimethylallyl group onto the adenine at position 37 in tRNAs that read codons beginning with uridine, leading to the formation of N6-(dimethylallyl)adenosine (i(6)A). In Lactobacillus delbrueckii subsp. bulgaricus (strain ATCC BAA-365 / Lb-18), this protein is tRNA dimethylallyltransferase.